Consider the following 335-residue polypeptide: COP9 signalosome complex subunit 5 (335 aa).

The MPN domain maps to 51-187 (VRISAVALLK…IGAFRTFPKD (137 aa)). The Zn(2+) site is built by histidine 134, histidine 136, and aspartate 147. A JAMM motif motif is present at residues 134 to 147 (HSHPGYGCWLSGID).

The protein belongs to the peptidase M67A family. CSN5 subfamily. As to quaternary structure, component of the COP9 signalosome (CSN) complex.

The protein localises to the cytoplasm. It is found in the nucleus. Functionally, catalytic component of the COP9 signalosome (CSN) complex that acts as an regulator of the ubiquitin (Ubl) conjugation pathway by mediating the deneddylation of the cullin subunit of SCF-type E3 ubiquitin-protein ligase complexes. The CSN complex seems to link protein degradation to sexual development. Required for fruit body formation. The sequence is that of COP9 signalosome complex subunit 5 (rri1) from Emericella nidulans (strain FGSC A4 / ATCC 38163 / CBS 112.46 / NRRL 194 / M139) (Aspergillus nidulans).